A 277-amino-acid polypeptide reads, in one-letter code: Probable endonuclease 4 (277 aa).

Zn(2+)-binding residues include H70, H108, E143, D176, H179, H210, D223, H225, and E255.

The protein belongs to the AP endonuclease 2 family. It depends on Zn(2+) as a cofactor.

It catalyses the reaction Endonucleolytic cleavage to 5'-phosphooligonucleotide end-products.. Endonuclease IV plays a role in DNA repair. It cleaves phosphodiester bonds at apurinic or apyrimidinic (AP) sites, generating a 3'-hydroxyl group and a 5'-terminal sugar phosphate. This is Probable endonuclease 4 from Mycoplasmopsis synoviae (strain 53) (Mycoplasma synoviae).